Reading from the N-terminus, the 80-residue chain is RNA-binding protein Hfq (80 aa).

The 60-residue stretch at 10–69 (DPFLNALRKEHVPVSIYLVNGIKLQGNIESFDQYVVLLRNTVTQMVYKHAISTVVPARPV) folds into the Sm domain.

It belongs to the Hfq family. In terms of assembly, homohexamer.

RNA chaperone that binds small regulatory RNA (sRNAs) and mRNAs to facilitate mRNA translational regulation in response to envelope stress, environmental stress and changes in metabolite concentrations. Also binds with high specificity to tRNAs. The polypeptide is RNA-binding protein Hfq (Burkholderia ambifaria (strain ATCC BAA-244 / DSM 16087 / CCUG 44356 / LMG 19182 / AMMD) (Burkholderia cepacia (strain AMMD))).